A 540-amino-acid polypeptide reads, in one-letter code: MTVMEHKKAALLDLTQYGLTGVTDVLRNPSYEQLFEEETRPDLEGYERGVMTELGSVAVDTGIFTGRSPKDKYIVKDNTTKDTLWWSDQGKNDNKAITPAVWDDLRSLVTTQLSGKRLFVIDGFCGANPDTRLNVRIITEVAWQAHFVKNMFIRPTEAELENFEPDFVVMNGAKATNPNYEKHGLNSENFVAFNLTERVQIIGGTWYGGEMKKGMFAMMNYLLPLKGIASMHCSANVGEKGDVAVFFGLSGTGKTTLSTDPKRQLIGDDEHGWDDDGIFNFEGGCYAKTIRLSKEAEPDIYNAIRRDALLENVTVRSDSSIDFNDGSKTENTRVSYPIYHIDNIVKPVSKAGHAKKVIFLTADAFGVLPPVAKLTPEQTKYHFLSGFTAKLAGTERGITEPTPTFSAAFGAAFLTLHPTQYAEVLVKRMEAAGAEAYIVNTGWNGTGKRISIQDTRGIIDAILDGSIDQAKTKNIPVFNLEVPTSLPGVDASILDPRDTYTDPLQWDSKAEDLAQRFIKNFAQYTDNEEGKALVKAGPQL.

Residues Arg-67, Tyr-207, and Lys-213 each coordinate substrate. Residues Lys-213, His-232, and 248–256 (GLSGTGKTT) each bind ATP. Mn(2+)-binding residues include Lys-213 and His-232. Position 269 (Asp-269) interacts with Mn(2+). Residues Glu-297, Arg-333, 449–450 (RI), and Thr-455 contribute to the ATP site. Position 333 (Arg-333) interacts with substrate.

It belongs to the phosphoenolpyruvate carboxykinase (ATP) family. As to quaternary structure, monomer. Mn(2+) is required as a cofactor.

It localises to the cytoplasm. It carries out the reaction oxaloacetate + ATP = phosphoenolpyruvate + ADP + CO2. The protein operates within carbohydrate biosynthesis; gluconeogenesis. In terms of biological role, involved in the gluconeogenesis. Catalyzes the conversion of oxaloacetate (OAA) to phosphoenolpyruvate (PEP) through direct phosphoryl transfer between the nucleoside triphosphate and OAA. This Aliivibrio fischeri (strain MJ11) (Vibrio fischeri) protein is Phosphoenolpyruvate carboxykinase (ATP).